The sequence spans 395 residues: PCI domain-containing protein 2 homolog (395 aa).

The 182-residue stretch at 208-389 folds into the PCI domain; it reads ITYKYFVGRR…NKLVVSKQNP (182 aa).

It belongs to the CSN12 family. Component of the nuclear pore complex (NPC)-associated TREX-2/AMEX complex (anchoring and mRNA export complex), composed of e(y)2, xmas and PCID2. Interaction between the TREX-2/AMEX complex and the ORC complex is required for ORC localization to mRNPs, and consequently mRNA export. Within the TREX-2/AMEX-ORC complex, interacts with Orc3 and Orc4. Interacts with sbr/NXF1. Interacts with Moe. Interacts with nudC; required to maintain stability in the cytoplasm. In terms of processing, mono- and poly-ubiquitinated.

Its subcellular location is the nucleus. It is found in the cytoplasm. The protein resides in the nucleus membrane. It localises to the cytoskeleton. Functionally, required for the export of nuclear mRNAs and involved in mRNA trafficking in the cytoplasm. Component of the nuclear pore complex (NPC)-associated TREX-2/AMEX complex (anchoring and mRNA export complex) which functions in docking export-competent ribonucleoprotein particles (mRNPs) to the nuclear entrance of the nuclear pore complex (nuclear basket), thereby enabling the export of mRNAs to the cytoplasm through the nuclear pores. Within the complex, specifically promotes the association of factors involved in regulating nuclear mRNA export, such as Moe, sbr/NXF1 and the ORC complex, to the mRNPs particles. In the cytoplasm, functions independently of its role in the TREX-2/AMEX complex, to promote cytoplasmic mRNA trafficking together with nudC. Associates with translationally active polysomes. The protein is PCI domain-containing protein 2 homolog of Drosophila melanogaster (Fruit fly).